A 327-amino-acid chain; its full sequence is Phenylalanine--tRNA ligase alpha subunit (327 aa).

E252 provides a ligand contact to Mg(2+).

This sequence belongs to the class-II aminoacyl-tRNA synthetase family. Phe-tRNA synthetase alpha subunit type 1 subfamily. In terms of assembly, tetramer of two alpha and two beta subunits. Mg(2+) serves as cofactor.

The protein resides in the cytoplasm. It carries out the reaction tRNA(Phe) + L-phenylalanine + ATP = L-phenylalanyl-tRNA(Phe) + AMP + diphosphate + H(+). The chain is Phenylalanine--tRNA ligase alpha subunit from Shewanella frigidimarina (strain NCIMB 400).